The following is a 329-amino-acid chain: Ketol-acid reductoisomerase (NADP(+)) (329 aa).

The KARI N-terminal Rossmann domain maps to 2-182; it reads TQLFYDTDAD…GGTRAGILET (181 aa). NADP(+) is bound by residues 25–28, Ser51, Ser53, and 83–86; these read YGSQ and DEFQ. Residue His108 is part of the active site. Gly134 is a binding site for NADP(+). One can recognise a KARI C-terminal knotted domain in the interval 183-328; that stretch reads NFKEETETDL…KGLRSMFSWL (146 aa). Residues Asp191, Glu195, Glu227, and Glu231 each contribute to the Mg(2+) site. Ser252 contacts substrate.

The protein belongs to the ketol-acid reductoisomerase family. Mg(2+) serves as cofactor.

The enzyme catalyses (2R)-2,3-dihydroxy-3-methylbutanoate + NADP(+) = (2S)-2-acetolactate + NADPH + H(+). It catalyses the reaction (2R,3R)-2,3-dihydroxy-3-methylpentanoate + NADP(+) = (S)-2-ethyl-2-hydroxy-3-oxobutanoate + NADPH + H(+). Its pathway is amino-acid biosynthesis; L-isoleucine biosynthesis; L-isoleucine from 2-oxobutanoate: step 2/4. It functions in the pathway amino-acid biosynthesis; L-valine biosynthesis; L-valine from pyruvate: step 2/4. In terms of biological role, involved in the biosynthesis of branched-chain amino acids (BCAA). Catalyzes an alkyl-migration followed by a ketol-acid reduction of (S)-2-acetolactate (S2AL) to yield (R)-2,3-dihydroxy-isovalerate. In the isomerase reaction, S2AL is rearranged via a Mg-dependent methyl migration to produce 3-hydroxy-3-methyl-2-ketobutyrate (HMKB). In the reductase reaction, this 2-ketoacid undergoes a metal-dependent reduction by NADPH to yield (R)-2,3-dihydroxy-isovalerate. The protein is Ketol-acid reductoisomerase (NADP(+)) of Prochlorococcus marinus (strain MIT 9312).